Consider the following 270-residue polypeptide: Formamidopyrimidine-DNA glycosylase (270 aa).

Pro-2 acts as the Schiff-base intermediate with DNA in catalysis. The active-site Proton donor is the Glu-3. The Proton donor; for beta-elimination activity role is filled by Lys-58. Residues His-91, Arg-110, and Arg-151 each coordinate DNA. An FPG-type zinc finger spans residues 236 to 270 (FAYGRAGEFCKVCGTTLREVKLGQRASVYCPRCQR). Arg-260 functions as the Proton donor; for delta-elimination activity in the catalytic mechanism.

The protein belongs to the FPG family. In terms of assembly, monomer. Requires Zn(2+) as cofactor.

It catalyses the reaction Hydrolysis of DNA containing ring-opened 7-methylguanine residues, releasing 2,6-diamino-4-hydroxy-5-(N-methyl)formamidopyrimidine.. The enzyme catalyses 2'-deoxyribonucleotide-(2'-deoxyribose 5'-phosphate)-2'-deoxyribonucleotide-DNA = a 3'-end 2'-deoxyribonucleotide-(2,3-dehydro-2,3-deoxyribose 5'-phosphate)-DNA + a 5'-end 5'-phospho-2'-deoxyribonucleoside-DNA + H(+). Involved in base excision repair of DNA damaged by oxidation or by mutagenic agents. Acts as a DNA glycosylase that recognizes and removes damaged bases. Has a preference for oxidized purines, such as 7,8-dihydro-8-oxoguanine (8-oxoG). Has AP (apurinic/apyrimidinic) lyase activity and introduces nicks in the DNA strand. Cleaves the DNA backbone by beta-delta elimination to generate a single-strand break at the site of the removed base with both 3'- and 5'-phosphates. This chain is Formamidopyrimidine-DNA glycosylase, found in Ectopseudomonas mendocina (strain ymp) (Pseudomonas mendocina).